Consider the following 628-residue polypeptide: Vacuolar-sorting receptor 3 (628 aa).

An N-terminal signal peptide occupies residues 1-24; that stretch reads MKQLLCYLPWLLLLTLLVSPLNDA. Residues 25–569 lie on the Lumenal side of the membrane; that stretch reads RFVVEKNSLS…SKTGAQVRSA (545 aa). The 113-residue stretch at 56–168 folds into the PA domain; it reads QYGGSMAGTV…GFGEKLKKAI (113 aa). N-linked (GlcNAc...) asparagine glycans are attached at residues Asn148, Asn294, and Asn434. 2 EGF-like domains span residues 416 to 466 and 469 to 516; these read ESNE…SHCE and GPGR…KKCE. Disulfide bonds link Cys420–Cys438, Cys427–Cys447, Cys449–Cys465, Cys473–Cys493, Cys480–Cys501, Cys503–Cys515, and Cys545–Cys558. An EGF-like 3; calcium-binding domain is found at 517–559; that stretch reads DINECKEKKACQCPECSCKNTWGSYECSCSGDLLYIRDHDTCI. A helical transmembrane segment spans residues 570–590; it reads WAAVWLIMLSLGLAAAGAYLV. At 591–628 the chain is on the cytoplasmic side; sequence YKYRLRQYMDSEIRAIMAQYMPLDSQPEIPNHVNDERA. The short motif at 610-613 is the Tyrosine-based internalization motif element; that stretch reads YMPL.

Belongs to the VSR (BP-80) family. Expressed in seeds, seedlings, roots, leaves, flowers and siliques.

The protein localises to the membrane. Its subcellular location is the golgi apparatus membrane. The protein resides in the cytoplasmic vesicle. It is found in the clathrin-coated vesicle membrane. It localises to the prevacuolar compartment membrane. Vacuolar-sorting receptor (VSR) involved in clathrin-coated vesicles sorting from Golgi apparatus to vacuoles. The protein is Vacuolar-sorting receptor 3 (VSR3) of Arabidopsis thaliana (Mouse-ear cress).